We begin with the raw amino-acid sequence, 199 residues long: MASSSTNSPCAACKFLRRKCQPECVFAPYFPPDQPQKFANVHKVFGASNVTKLLNELHPSQREDAVNSLAYEADMRLRDPVYGCVGVISLLQHQLRQLQIDLSCAKSELSKYQSLGILAATHQSLGINLLAGAADGTATAVRDHYHHHQFFPREQMFGGLDVPAGNNYDGGILAIGQITQFQQPRAAAGDDGRRTVDPS.

Residues Ser-8–Leu-109 form the LOB domain.

It belongs to the LOB domain-containing protein family. As to quaternary structure, homo- and heterodimer with AS1. Interacts with AS1. Part of the AS1 repressor complex composed of AS1, LBD6/AS2 and HDA6. Interacts with LFR. Expressed in young shoots, roots, stems, leaves, flowers and adaxial domains of cotyledonary and leaves primordia.

It localises to the nucleus. Negative regulator of cell proliferation in the adaxial side of leaves. Regulates the formation of a symmetric lamina and the establishment of venation. Positively regulates LATERAL ORGAN BOUNDARIES (LOB) within the shoot apex, and the class III HD-ZIP genes REV, PHB, and PHV. Interacts directly with ASYMMETRIC LEAVES 1 (AS1) to repress the knox homeobox genes KNAT1, KNAT2, and KNAT6 and the abaxial determinants ARF3, KAN2 and YAB5. May act in parallel with the RDR6-SGS3-AGO7 pathway, an endogenous RNA silencing pathway, to regulate the leaf morphogenesis. Required for the binding of AS1 to the KNOX genes. Involved in leaf polarity establishment by functioning cooperatively with RH10 or RID2 to repress abaxial genes ARF3, ARF4, KAN1, KAN2, YAB1 and YAB5, and the knox homeobox genes KNAT1, KNAT2, KNAT6, and STM to promote adaxial development in leaf primordia at shoot apical meristems at high temperatures. The polypeptide is Protein ASYMMETRIC LEAVES 2 (Arabidopsis thaliana (Mouse-ear cress)).